A 117-amino-acid chain; its full sequence is Nitrogen regulatory protein GlnK1 (117 aa).

ADP is bound by residues T32, 40–42 (GAQ), and 92–95 (GSGK). ATP contacts are provided by residues T32, 40-42 (GAQ), and 92-95 (GSGK).

Belongs to the P(II) protein family. As to quaternary structure, homotrimer. Interacts and forms stable complexes with the glutamine synthetase GlnA1.

The protein resides in the cytoplasm. Inhibitory effects on GlnA1 are abolished in the presence of the effector 2-oxoglutarate. Involved in the regulation of nitrogen metabolism. Regulates the activity of its targets by protein-protein interaction in response to the nitrogen status of the cell. Allows finetuning control of the glutamine synthetase GlnA1 under changing nitrogen availabilities via direct protein interaction. The protein is Nitrogen regulatory protein GlnK1 of Methanosarcina mazei (strain ATCC BAA-159 / DSM 3647 / Goe1 / Go1 / JCM 11833 / OCM 88) (Methanosarcina frisia).